Consider the following 294-residue polypeptide: Probable 2-(5''-triphosphoribosyl)-3'-dephosphocoenzyme-A synthase (294 aa).

Belongs to the CitG/MdcB family.

The enzyme catalyses 3'-dephospho-CoA + ATP = 2'-(5''-triphospho-alpha-D-ribosyl)-3'-dephospho-CoA + adenine. This Streptococcus equi subsp. zooepidemicus (strain MGCS10565) protein is Probable 2-(5''-triphosphoribosyl)-3'-dephosphocoenzyme-A synthase.